Here is a 136-residue protein sequence, read N- to C-terminus: ATP synthase F(0) complex subunit C1, mitochondrial (136 aa).

The N-terminal 61 residues, 1–61 (MQTTKALLIS…REFQTSVISR (61 aa)), are a transit peptide targeting the mitochondrion. The helical transmembrane segment at 77 to 97 (VGVAGSGAGIGTVFGSLIIGY) threads the bilayer. Lys-104 carries the N6,N6,N6-trimethyllysine modification. A helical transmembrane segment spans residues 112–132 (ILGFALSEAMGLFCLMVAFLI).

The protein belongs to the ATPase C chain family. In terms of assembly, homooctamer; the c-ring consists of eight c subunits forming a circle, and each subunit adopts a hairpin shape. Component of the ATP synthase complex composed at least of ATP5F1A/subunit alpha, ATP5F1B/subunit beta, ATP5MC1/subunit c (homooctomer), MT-ATP6/subunit a, MT-ATP8/subunit 8, ATP5ME/subunit e, ATP5MF/subunit f, ATP5MG/subunit g, ATP5MK/subunit k, ATP5MJ/subunit j, ATP5F1C/subunit gamma, ATP5F1D/subunit delta, ATP5F1E/subunit epsilon, ATP5PF/subunit F6, ATP5PB/subunit b, ATP5PD/subunit d, ATP5PO/subunit OSCP. ATP synthase complex consists of a soluble F(1) head domain (subunits alpha(3) and beta(3)) - the catalytic core - and a membrane F(0) domain - the membrane proton channel (subunits c, a, 8, e, f, g, k and j). These two domains are linked by a central stalk (subunits gamma, delta, and epsilon) rotating inside the F1 region and a stationary peripheral stalk (subunits F6, b, d, and OSCP). Interacts with TMEM70 (homooligomer form); this interaction facilitates the oligomer formation of subunit c/ATP5MC1 (c-ring) and the c-ring membrane insertion and also protects ATP5MC1 against intramitochondrial proteolysis. In terms of processing, trimethylated by ATPSCKMT at Lys-104. Methylation is required for proper incorporation of the C subunit into the ATP synthase complex and mitochondrial respiration.

It is found in the mitochondrion membrane. It catalyses the reaction H(+)(in) = H(+)(out). Its function is as follows. Subunit c, of the mitochondrial membrane ATP synthase complex (F(1)F(0) ATP synthase or Complex V) that produces ATP from ADP in the presence of a proton gradient across the membrane which is generated by electron transport complexes of the respiratory chain. ATP synthase complex consist of a soluble F(1) head domain - the catalytic core - and a membrane F(1) domain - the membrane proton channel. These two domains are linked by a central stalk rotating inside the F(1) region and a stationary peripheral stalk. During catalysis, ATP synthesis in the catalytic domain of F(1) is coupled via a rotary mechanism of the central stalk subunits to proton translocation. With the subunit a (MT-ATP6), forms the proton-conducting channel in the F(0) domain, that contains two crucial half-channels (inlet and outlet) that facilitate proton movement from the mitochondrial intermembrane space (IMS) into the matrix. Protons are taken up via the inlet half-channel and released through the outlet half-channel, following a Grotthuss mechanism. The chain is ATP synthase F(0) complex subunit C1, mitochondrial from Rattus norvegicus (Rat).